Reading from the N-terminus, the 315-residue chain is NAD(P)H-dependent 6'-deoxychalcone synthase (315 aa).

Tyr-59 (proton donor) is an active-site residue. A substrate-binding site is contributed by His-121. Ser-216 to Asn-274 contacts NADP(+).

It belongs to the aldo/keto reductase family. In terms of assembly, monomer.

The enzyme catalyses 4-coumaroyl-CoA + 3 malonyl-CoA + NADPH + 4 H(+) = isoliquiritigenin + 3 CO2 + NADP(+) + 4 CoA + H2O. It participates in phytoalexin biosynthesis; glyceollin biosynthesis. Co-acts with chalcone synthase in formation of 4,2',4'-trihydroxychalcone, involved in the biosynthesis of glyceollin type phytoalexins. The polypeptide is NAD(P)H-dependent 6'-deoxychalcone synthase (Glycine max (Soybean)).